A 241-amino-acid chain; its full sequence is Trypsin-10 (241 aa).

The N-terminal stretch at 1 to 13 (MKSLIFVLLLGAV) is a signal peptide. Residues 14 to 19 (FAEEDK) constitute a propeptide, activation peptide. Residues 20 to 239 (IVGGYECTRH…LSGWVRDTMA (220 aa)) form the Peptidase S1 domain. Cystine bridges form between Cys26–Cys155, Cys44–Cys60, Cys128–Cys228, Cys135–Cys201, Cys166–Cys180, and Cys191–Cys215. Residues His59 and Asp103 each act as charge relay system in the active site. The Charge relay system role is filled by Ser195.

The protein belongs to the peptidase S1 family.

It is found in the secreted. The protein resides in the extracellular space. It carries out the reaction Preferential cleavage: Arg-|-Xaa, Lys-|-Xaa.. This is Trypsin-10 from Gadus morhua (Atlantic cod).